We begin with the raw amino-acid sequence, 139 residues long: Protein PsiE homolog (139 aa).

The next 4 membrane-spanning stretches (helical) occupy residues 20–40 (IVLC…LVKI), 60–80 (AEQA…VQYF), 85–105 (HFPL…LIIV), and 111–131 (VDTI…CLVL).

This sequence belongs to the PsiE family.

It is found in the cell inner membrane. The protein is Protein PsiE homolog of Haemophilus influenzae (strain 86-028NP).